A 473-amino-acid chain; its full sequence is Inactive levansucrase (473 aa).

The N-terminal stretch at 1–29 (MNIKKFAKQATVLTFTTALLAGGATQAFA) is a signal peptide.

The protein belongs to the glycosyl hydrolase 68 family.

The protein resides in the secreted. The polypeptide is Inactive levansucrase (sacB) (Geobacillus stearothermophilus (Bacillus stearothermophilus)).